Consider the following 276-residue polypeptide: MSDLKTMIENAWDNRDSISPSTVSVEVKQAIIDALDLLDSGAARVAEKISGEWVVHQWLKKAVLLSFRIRENQAMDDGVNQFYDKVPLKFSDYTPEQFKQGGMRVVPNAVARKGSFVGKNVVLMPSYVNIGAYVDDGTMVDTWATVGSCAQIGKNVHLSGGVGIGGVLEPLQANPTIIEDNCFIGARSEIVEGVIVEEGAVISMGVYISQSTRIYDRETGEIHYGRVPAGAVVVPGALPSKDGSHSLYAAIIVKKVDQQTREKVGINALLRSIDDE.

Substrate contacts are provided by Arg104 and Asp141.

It belongs to the transferase hexapeptide repeat family. As to quaternary structure, homotrimer.

The protein localises to the cytoplasm. The enzyme catalyses (S)-2,3,4,5-tetrahydrodipicolinate + succinyl-CoA + H2O = (S)-2-succinylamino-6-oxoheptanedioate + CoA. Its pathway is amino-acid biosynthesis; L-lysine biosynthesis via DAP pathway; LL-2,6-diaminopimelate from (S)-tetrahydrodipicolinate (succinylase route): step 1/3. This is 2,3,4,5-tetrahydropyridine-2,6-dicarboxylate N-succinyltransferase from Pseudoalteromonas translucida (strain TAC 125).